A 607-amino-acid chain; its full sequence is Glutamine--fructose-6-phosphate aminotransferase [isomerizing] (607 aa).

Cysteine 2 acts as the Nucleophile; for GATase activity in catalysis. The Glutamine amidotransferase type-2 domain maps to 2–217 (CGIIGILGKK…DGDWAVLTRE (216 aa)). SIS domains are found at residues 277-422 (TVRS…QRGS) and 455-597 (ICRD…VDQP). The active-site For Fru-6P isomerization activity is the lysine 602.

In terms of assembly, homodimer.

The protein resides in the cytoplasm. The enzyme catalyses D-fructose 6-phosphate + L-glutamine = D-glucosamine 6-phosphate + L-glutamate. Catalyzes the first step in hexosamine metabolism, converting fructose-6P into glucosamine-6P using glutamine as a nitrogen source. The chain is Glutamine--fructose-6-phosphate aminotransferase [isomerizing] from Bartonella quintana (strain Toulouse) (Rochalimaea quintana).